The sequence spans 385 residues: Queuine tRNA-ribosyltransferase (385 aa).

The active-site Proton acceptor is aspartate 92. Substrate is bound by residues 92–96 (DSGGF), aspartate 146, glutamine 188, and glycine 215. Residues 246–252 (GVGHPED) form an RNA binding region. The active-site Nucleophile is aspartate 265. The segment at 270–274 (TRTGR) is RNA binding; important for wobble base 34 recognition. Cysteine 303, cysteine 305, cysteine 308, and histidine 334 together coordinate Zn(2+).

It belongs to the queuine tRNA-ribosyltransferase family. Homodimer. Within each dimer, one monomer is responsible for RNA recognition and catalysis, while the other monomer binds to the replacement base PreQ1. It depends on Zn(2+) as a cofactor.

It catalyses the reaction 7-aminomethyl-7-carbaguanine + guanosine(34) in tRNA = 7-aminomethyl-7-carbaguanosine(34) in tRNA + guanine. It participates in tRNA modification; tRNA-queuosine biosynthesis. Catalyzes the base-exchange of a guanine (G) residue with the queuine precursor 7-aminomethyl-7-deazaguanine (PreQ1) at position 34 (anticodon wobble position) in tRNAs with GU(N) anticodons (tRNA-Asp, -Asn, -His and -Tyr). Catalysis occurs through a double-displacement mechanism. The nucleophile active site attacks the C1' of nucleotide 34 to detach the guanine base from the RNA, forming a covalent enzyme-RNA intermediate. The proton acceptor active site deprotonates the incoming PreQ1, allowing a nucleophilic attack on the C1' of the ribose to form the product. After dissociation, two additional enzymatic reactions on the tRNA convert PreQ1 to queuine (Q), resulting in the hypermodified nucleoside queuosine (7-(((4,5-cis-dihydroxy-2-cyclopenten-1-yl)amino)methyl)-7-deazaguanosine). The polypeptide is Queuine tRNA-ribosyltransferase (Thermus thermophilus (strain ATCC 27634 / DSM 579 / HB8)).